The chain runs to 752 residues: MVVGTKKYSNLDFVPTISDSEDDVPILDSSDDEKVEAKKTTKKRKGKNNKKKVSEGDNLDEDVHEDLDAGFKFDLDADDTTSNFQGWNFLAEGESNKDDAEAFVKKDVDLDKIIRRKGGLVKMAHIDSKQEEETEKEKVEKENDSDDEELAMDGFGMGAPMNNGDENQSEEEEEEEEKEEEEEEEEEQEEMTLEKGGKDDEIDEEDDSEEAKADFYAPETEGDEAKKQMYENFNSLSLSRPVLKGLASLGYVKPSPIQSATIPIALLGKDIIAGAVTGSGKTAAFMIPIIERLLYKPAKIASTRVIVLLPTRELAIQVADVGKQIARFVSGITFGLAVGGLNLRQQEQMLKSRPDIVIATPGRFIDHIRNSASFNVDSVEILVMDEADRMLEEGFQDELNEIMGLLPSNRQNLLFSATMNSKIKSLVSLSLKKPVRIMIDPPKKAATKLTQEFVRIRKRDHLKPALLFNLIRKLDPTGQKRIVVFVARKETAHRLRIIMGLLGMSVGELHGSLTQEQRLDSVNKFKNLEVPVLICTDLASRGLDIPKIEVVINYDMPKSYEIYLHRVGRTARAGREGRSVTFVGESSQDRSIVRAAIKSVEENKSLTQGKALGRNVDWVQIEETNKLVESMNDTIEDILVEEKEEKEILRAEMQLRKGENMLKHKKEIQARPRRTWFQSESDKKNSKVLGALSRNKKVTNSKKRKREEAKADGNGARSYRKTKTDRIADQERTFKKQKSTNSNKKKGFKSRR.

2 disordered regions span residues 1 to 61 and 119 to 223; these read MVVG…NLDE and GLVK…TEGD. Residues 19 to 34 are compositionally biased toward acidic residues; it reads DSEDDVPILDSSDDEK. Basic residues predominate over residues 40–51; sequence TTKKRKGKNNKK. The span at 124–142 shows a compositional bias: basic and acidic residues; the sequence is AHIDSKQEEETEKEKVEKE. Acidic residues-rich tracts occupy residues 167–191 and 200–209; these read NQSE…QEEM and DEIDEEDDSE. Ser-208 bears the Phosphoserine mark. Positions 231–259 match the Q motif motif; that stretch reads ENFNSLSLSRPVLKGLASLGYVKPSPIQS. In terms of domain architecture, Helicase ATP-binding spans 262–437; that stretch reads IPIALLGKDI…SLSLKKPVRI (176 aa). Residue 275-282 participates in ATP binding; that stretch reads AVTGSGKT. The DEAD box signature appears at 385–388; sequence DEAD. In terms of domain architecture, Helicase C-terminal spans 448–639; that stretch reads KLTQEFVRIR…SMNDTIEDIL (192 aa). Residues 621–667 adopt a coiled-coil conformation; the sequence is IEETNKLVESMNDTIEDILVEEKEEKEILRAEMQLRKGENMLKHKKE. Positions 673–752 are disordered; sequence RRTWFQSESD…NKKKGFKSRR (80 aa). Residues 694 to 705 show a composition bias toward basic residues; that stretch reads RNKKVTNSKKRK. Residues 722 to 734 are compositionally biased toward basic and acidic residues; sequence TKTDRIADQERTF. Over residues 735–752 the composition is skewed to basic residues; sequence KKQKSTNSNKKKGFKSRR.

Belongs to the DEAD box helicase family. DDX27/DRS1 subfamily. As to quaternary structure, interacts with RRP1 and associates with pre-ribosomal particles.

The protein resides in the nucleus. The protein localises to the nucleolus. It catalyses the reaction ATP + H2O = ADP + phosphate + H(+). In terms of biological role, ATP-binding RNA helicase involved in ribosome assembly. The polypeptide is ATP-dependent RNA helicase DRS1 (DRS1) (Saccharomyces cerevisiae (strain ATCC 204508 / S288c) (Baker's yeast)).